The following is a 248-amino-acid chain: Coproheme decarboxylase (248 aa).

Fe-coproporphyrin III-binding positions include R130, Y144, 144-148 (YPMDK), K148, H171, Q184, and S222. Residue Y144 is part of the active site.

This sequence belongs to the ChdC family. Type 1 subfamily. Homopentamer. Requires Fe-coproporphyrin III as cofactor.

The enzyme catalyses Fe-coproporphyrin III + 2 H2O2 + 2 H(+) = heme b + 2 CO2 + 4 H2O. It carries out the reaction Fe-coproporphyrin III + H2O2 + H(+) = harderoheme III + CO2 + 2 H2O. It catalyses the reaction harderoheme III + H2O2 + H(+) = heme b + CO2 + 2 H2O. Its pathway is porphyrin-containing compound metabolism; protoheme biosynthesis. Functionally, involved in coproporphyrin-dependent heme b biosynthesis. Catalyzes the decarboxylation of Fe-coproporphyrin III (coproheme) to heme b (protoheme IX), the last step of the pathway. The reaction occurs in a stepwise manner with a three-propionate harderoheme intermediate. The protein is Coproheme decarboxylase of Geobacillus stearothermophilus (strain DSM 13240 / CIP 106956 / 10).